A 326-amino-acid polypeptide reads, in one-letter code: Eukaryotic translation initiation factor 3 subunit I (326 aa).

WD repeat units follow at residues 8-47, 50-89, 145-184, 188-227, and 285-326; these read GHER…RLGT, GHQG…VIAS, MTES…KVVD, DHSA…CLKT, and GHFG…NIFE.

This sequence belongs to the eIF-3 subunit I family. Component of the eukaryotic translation initiation factor 3 (eIF-3) complex. The eIF-3 complex interacts with pix.

The protein localises to the cytoplasm. Its function is as follows. Component of the eukaryotic translation initiation factor 3 (eIF-3) complex, which is involved in protein synthesis of a specialized repertoire of mRNAs and, together with other initiation factors, stimulates binding of mRNA and methionyl-tRNAi to the 40S ribosome. The eIF-3 complex specifically targets and initiates translation of a subset of mRNAs involved in cell proliferation. This chain is Eukaryotic translation initiation factor 3 subunit I, found in Drosophila erecta (Fruit fly).